The chain runs to 172 residues: MSSSQNNNSSWIDWFLGIKGNQFLCRVPTDYVQDTFNQMGLEYFSEILDVILKPVIDSSSGLLYGDEKKWYGMIHARYIRSERGLIAMHRKYMRGDFGSCPNISCDRQNTLPVGLSAVWGKSTVKIHCPRCKSNFHPKSDTQLDGAMFGPSFPDIFFSMLPNLTSPLDDPRT.

The protein belongs to the casein kinase 2 subunit beta family. Interacts in vitro with the casein kinase 2 alpha subunit (CkII-alpha). The relevance of such interaction is however unclear in vivo. In terms of tissue distribution, probably not expressed in wild-type flies. In males lacking the Y chromosome, it is testis-specific and constitutes the main component of star-shaped crystals.

Its function is as follows. Unknown. In males lacking the Y chromosome, its strong overexpression leads to the appearance of proteinaceous star-shaped crystals in the primary spermatocytes causing meiotic drive, possibly by interfering with normal casein kinase 2 activity. This Drosophila melanogaster (Fruit fly) protein is Stellate protein CG33239/CG33241 (Ste:CG33239).